A 440-amino-acid chain; its full sequence is Branched-chain amino acid permease BrnQ (440 aa).

The next 12 helical transmembrane spans lie at 9–29 (YIII…NLIF), 46–66 (AGFL…FVFS), 80–100 (PVFG…FFAI), 121–141 (SPVS…LLSL), 149–169 (IVGK…VAVA), 196–216 (GYLT…VNAL), 227–247 (LIVV…VMYT), 284–304 (ILLG…LITA), 321–341 (IAVV…TQLI), 348–368 (LLTM…HSVF), 378–398 (SLLF…GIKI), and 414–434 (IGLG…ILSI).

It belongs to the branched chain amino acid transporter family.

The protein resides in the cell membrane. Functionally, branched-chain amino acid transport system which is involved in the uptake of isoleucine and valine. Probably does not transport leucine. Together with BcaP and BraB, plays an important role in the activation of CodY, a branched-chain amino acid-responsive transcriptional regulator that controls the expression of several dozen transcription units in B.subtilis. The chain is Branched-chain amino acid permease BrnQ from Bacillus subtilis (strain 168).